We begin with the raw amino-acid sequence, 386 residues long: Chaperone protein DnaJ (386 aa).

In terms of domain architecture, J spans 5-70; that stretch reads DYYEVLGVER…QKRAAYDRYG (66 aa). The segment at 138–216 adopts a CR-type zinc-finger fold; sequence GKDETIHVPQ…CGGHGQVKEE (79 aa). Zn(2+) is bound by residues cysteine 151, cysteine 154, cysteine 168, cysteine 171, cysteine 190, cysteine 193, cysteine 204, and cysteine 207. CXXCXGXG motif repeat units follow at residues 151–158, 168–175, 190–197, and 204–211; these read CRPCEGTG, CETCGGHG, CHICQGRG, and CKTCGGHG.

Belongs to the DnaJ family. In terms of assembly, homodimer. Zn(2+) is required as a cofactor.

The protein localises to the cytoplasm. Functionally, participates actively in the response to hyperosmotic and heat shock by preventing the aggregation of stress-denatured proteins and by disaggregating proteins, also in an autonomous, DnaK-independent fashion. Unfolded proteins bind initially to DnaJ; upon interaction with the DnaJ-bound protein, DnaK hydrolyzes its bound ATP, resulting in the formation of a stable complex. GrpE releases ADP from DnaK; ATP binding to DnaK triggers the release of the substrate protein, thus completing the reaction cycle. Several rounds of ATP-dependent interactions between DnaJ, DnaK and GrpE are required for fully efficient folding. Also involved, together with DnaK and GrpE, in the DNA replication of plasmids through activation of initiation proteins. In Hyphomonas neptunium (strain ATCC 15444), this protein is Chaperone protein DnaJ.